A 216-amino-acid polypeptide reads, in one-letter code: Elongation factor Ts (216 aa).

The tract at residues 81–84 (TDFV) is involved in Mg(2+) ion dislocation from EF-Tu.

Belongs to the EF-Ts family.

It localises to the cytoplasm. Its function is as follows. Associates with the EF-Tu.GDP complex and induces the exchange of GDP to GTP. It remains bound to the aminoacyl-tRNA.EF-Tu.GTP complex up to the GTP hydrolysis stage on the ribosome. This Geotalea daltonii (strain DSM 22248 / JCM 15807 / FRC-32) (Geobacter daltonii) protein is Elongation factor Ts.